Here is a 325-residue protein sequence, read N- to C-terminus: MITDRQLSILNAILEDYVDFGQPVGSKTLIERHNLNVSPATIRNEMKQLEDLNYIEKAHSSSGRSPSQLGFRYYVNRLLEQTSHQKTNKLRRLNQLLVENQYDVSSALTYFADELSNISQYTTLVVHPNHKQDIINNVHLIRANPNLVIMVIVFSSGHVEHVHLASDIPFSNDKLNTISNFVTNKLTEFNQNLQDDIVSFVQSEQEEIFINKLINTMNNHISNQSNSIYMGGKVKLIDALNESNVSSIQPILQYIESNRIAELLQDISSPNINVKIGNEIDDSLSDISIVTSQYHFDETLKGQIAVIGPTAMHYQNVIQLLNRIW.

This sequence belongs to the HrcA family.

In terms of biological role, negative regulator of class I heat shock genes (grpE-dnaK-dnaJ and groELS operons). Prevents heat-shock induction of these operons. The polypeptide is Heat-inducible transcription repressor HrcA (Staphylococcus aureus (strain bovine RF122 / ET3-1)).